The chain runs to 253 residues: 3-deoxy-manno-octulosonate cytidylyltransferase (253 aa).

Belongs to the KdsB family.

Its subcellular location is the cytoplasm. The enzyme catalyses 3-deoxy-alpha-D-manno-oct-2-ulosonate + CTP = CMP-3-deoxy-beta-D-manno-octulosonate + diphosphate. The protein operates within nucleotide-sugar biosynthesis; CMP-3-deoxy-D-manno-octulosonate biosynthesis; CMP-3-deoxy-D-manno-octulosonate from 3-deoxy-D-manno-octulosonate and CTP: step 1/1. It participates in bacterial outer membrane biogenesis; lipopolysaccharide biosynthesis. In terms of biological role, activates KDO (a required 8-carbon sugar) for incorporation into bacterial lipopolysaccharide in Gram-negative bacteria. The protein is 3-deoxy-manno-octulosonate cytidylyltransferase of Acinetobacter baumannii (strain AYE).